The following is a 365-amino-acid chain: Chorismate synthase (365 aa).

Residues arginine 48 and arginine 54 each coordinate NADP(+). Residues 125-127, 238-239, glycine 278, 293-297, and arginine 319 each bind FMN; these read RSS, NA, and KPTSS.

It belongs to the chorismate synthase family. As to quaternary structure, homotetramer. Requires FMNH2 as cofactor.

It carries out the reaction 5-O-(1-carboxyvinyl)-3-phosphoshikimate = chorismate + phosphate. The protein operates within metabolic intermediate biosynthesis; chorismate biosynthesis; chorismate from D-erythrose 4-phosphate and phosphoenolpyruvate: step 7/7. Functionally, catalyzes the anti-1,4-elimination of the C-3 phosphate and the C-6 proR hydrogen from 5-enolpyruvylshikimate-3-phosphate (EPSP) to yield chorismate, which is the branch point compound that serves as the starting substrate for the three terminal pathways of aromatic amino acid biosynthesis. This reaction introduces a second double bond into the aromatic ring system. This is Chorismate synthase from Vesicomyosocius okutanii subsp. Calyptogena okutanii (strain HA).